A 101-amino-acid polypeptide reads, in one-letter code: MSDQEAKPSTEDLGDKKEGEYIKLKVIGQDSSEIHFKVKMTTHLKKLKESYCQRQGVPMNSLRFLFEGQRIADNHTPKELGMEEEDVIEVYQEQTGGHSTV.

N-acetylserine is present on Ser2. Ser2 is subject to Phosphoserine. Lys7 participates in a covalent cross-link: Glycyl lysine isopeptide (Lys-Gly) (interchain with G-Cter in SUMO1); alternate. Residue Lys7 forms a Glycyl lysine isopeptide (Lys-Gly) (interchain with G-Cter in SUMO2); alternate linkage. Ser9 carries the phosphoserine modification. Residues Lys16, Lys17, and Lys23 each participate in a glycyl lysine isopeptide (Lys-Gly) (interchain with G-Cter in SUMO2) cross-link. A (Microbial infection) Interaction with Tula hantavirus region spans residues 16-25; sequence KKEGEYIKLK. The Ubiquitin-like domain occupies 20–97; the sequence is EYIKLKVIGQ…IEVYQEQTGG (78 aa). A Glycyl lysine isopeptide (Lys-Gly) (interchain with G-Cter in SUMO1) cross-link involves residue Lys25. Ser32 is modified (phosphoserine). Residues Lys37, Lys39, Lys45, and Lys46 each participate in a glycyl lysine isopeptide (Lys-Gly) (interchain with G-Cter in SUMO2) cross-link. Residues 37–40 form a (Microbial infection) Interaction with Tula hantavirus region; sequence KVKM. Residue Gly97 forms a Glycyl lysine isopeptide (Gly-Lys) (interchain with K-? in acceptor proteins) linkage. Residues 98 to 101 constitute a propeptide that is removed on maturation; the sequence is HSTV.

Belongs to the ubiquitin family. SUMO subfamily. As to quaternary structure, covalently attached to KCNB1; UBE2I increases cross-linking with KCNB1 and PIAS1 decreases cross-links with KCNB1. Interacts with SAE2, RANBP2, PIAS1 and PIAS2. Interacts with PRKN. Covalently attached to a number of proteins such as IKFZ1, PML, RANGAP1, HIPK2, SP100, p53, p73-alpha, MDM2, JUN, DNMT3B and TDG. Also interacts with HIF1A, HIPK2, HIPK3, CHD3, EXOSC9, RAD51 and RAD52. Interacts with USP25 (via ts SIM domain); the interaction weakly sumoylates USP25. Interacts with SIMC1, CASP8AP2, RNF111 and SOBP (via SIM domains). Interacts with BHLHE40/DEC1. Interacts with RWDD3. Interacts with UBE2I/UBC9 and this interaction is enhanced in the presence of RWDD3. Interacts with MTA1. Interacts with SENP2. Interacts with HINT1. In terms of assembly, (Microbial infection) Interacts with Epstein-barr virus BGLF4. (Microbial infection) Interacts (via N-terminus) with Tula hantavirus nucleoprotein. As to quaternary structure, (Microbial infection) Interacts (via N-terminus) with Hantaan hantavirus nucleoprotein. Cleavage of precursor form by SENP1 or SENP2 is necessary for function. In terms of processing, polymeric SUMO1 chains undergo polyubiquitination by RNF4.

The protein localises to the nucleus membrane. The protein resides in the nucleus speckle. It is found in the cytoplasm. Its subcellular location is the nucleus. It localises to the PML body. The protein localises to the cell membrane. Functionally, ubiquitin-like protein that can be covalently attached to proteins as a monomer or a lysine-linked polymer. Covalent attachment via an isopeptide bond to its substrates requires prior activation by the E1 complex SAE1-SAE2 and linkage to the E2 enzyme UBE2I, and can be promoted by E3 ligases such as PIAS1-4, RANBP2 or CBX4. This post-translational modification on lysine residues of proteins plays a crucial role in a number of cellular processes such as nuclear transport, DNA replication and repair, mitosis and signal transduction. Involved for instance in targeting RANGAP1 to the nuclear pore complex protein RANBP2. Covalently attached to the voltage-gated potassium channel KCNB1; this modulates the gating characteristics of KCNB1. Polymeric SUMO1 chains are also susceptible to polyubiquitination which functions as a signal for proteasomal degradation of modified proteins. May also regulate a network of genes involved in palate development. Covalently attached to ZFHX3. This chain is Small ubiquitin-related modifier 1 (SUMO1), found in Homo sapiens (Human).